A 677-amino-acid polypeptide reads, in one-letter code: Protein hook (677 aa).

The 118-residue stretch at 6 to 123 (NEMYYSLLEW…RLLQLVLGCA (118 aa)) folds into the Calponin-homology (CH) domain. Coiled-coil stretches lie at residues 135–436 (EIMC…KCGH) and 478–588 (QTAL…AKEV).

It belongs to the hook family. Homodimer. Interacts with microtubules via its N-terminus.

Its subcellular location is the cytoplasm. It localises to the cytoskeleton. The protein localises to the endosome. It is found in the synapse. In terms of biological role, involved in endocytic trafficking by stabilizing organelles of the endocytic pathway. Probably acts as a cytoskeletal linker protein required to tether endosome vesicles to the cytoskeleton. Involved in modulation of endocytosis at stages required for down-regulation of membrane proteins that control synapse size. Not involved in synaptic vesicle recycling. Required in R7 cells for boss endocytosis into multivesicular bodies (MVBs). Has a role in regulating adult longevity. The polypeptide is Protein hook (Drosophila pseudoobscura pseudoobscura (Fruit fly)).